Here is a 328-residue protein sequence, read N- to C-terminus: Type II secretion system protein K (328 aa).

The propeptide at 1 to 7 (MRSRQRG) is leader sequence. The chain crosses the membrane as a helical span at residues 8 to 28 (AALLVVLLILALMVTIAAVIT). The Periplasmic segment spans residues 29 to 328 (ERTGKAFLRT…QYGGYRTVNP (300 aa)).

It belongs to the GSP K family. As to quaternary structure, type II secretion is composed of four main components: the outer membrane complex, the inner membrane complex, the cytoplasmic secretion ATPase and the periplasm-spanning pseudopilus. Interacts with core component OutG. In terms of processing, cleaved by prepilin peptidase.

It localises to the cell inner membrane. Functionally, component of the type II secretion system required for the energy-dependent secretion of extracellular factors such as proteases and toxins from the periplasm. Plays a role in pseudopilus assembly and seems to control its length. Interacts with the pseudopilus tip complex that is critical for the recognition and binding of secretion substrates. The polypeptide is Type II secretion system protein K (outK) (Pectobacterium carotovorum subsp. carotovorum (Erwinia carotovora subsp. carotovora)).